A 203-amino-acid polypeptide reads, in one-letter code: Holliday junction branch migration complex subunit RuvA (203 aa).

The interval 1 to 63 (MIAFVSGPVA…EDSLTLYGFV (63 aa)) is domain I. Residues 64–141 (DDDERQVFEL…GEPLGTGGPA (78 aa)) are domain II. Residues 141-145 (AIGRA) form a flexible linker region. A domain III region spans residues 146–203 (VTTGWREQLHAALIGLGYATREADEAVAAVAPQAEAAGGTPQVGQLLKAALQTLNRTR).

The protein belongs to the RuvA family. As to quaternary structure, homotetramer. Forms an RuvA(8)-RuvB(12)-Holliday junction (HJ) complex. HJ DNA is sandwiched between 2 RuvA tetramers; dsDNA enters through RuvA and exits via RuvB. An RuvB hexamer assembles on each DNA strand where it exits the tetramer. Each RuvB hexamer is contacted by two RuvA subunits (via domain III) on 2 adjacent RuvB subunits; this complex drives branch migration. In the full resolvosome a probable DNA-RuvA(4)-RuvB(12)-RuvC(2) complex forms which resolves the HJ.

It is found in the cytoplasm. The RuvA-RuvB-RuvC complex processes Holliday junction (HJ) DNA during genetic recombination and DNA repair, while the RuvA-RuvB complex plays an important role in the rescue of blocked DNA replication forks via replication fork reversal (RFR). RuvA specifically binds to HJ cruciform DNA, conferring on it an open structure. The RuvB hexamer acts as an ATP-dependent pump, pulling dsDNA into and through the RuvAB complex. HJ branch migration allows RuvC to scan DNA until it finds its consensus sequence, where it cleaves and resolves the cruciform DNA. This chain is Holliday junction branch migration complex subunit RuvA, found in Streptomyces avermitilis (strain ATCC 31267 / DSM 46492 / JCM 5070 / NBRC 14893 / NCIMB 12804 / NRRL 8165 / MA-4680).